Reading from the N-terminus, the 876-residue chain is Leucine--tRNA ligase (876 aa).

Positions 43–53 (PYPSGRIHMGH) match the 'HIGH' region motif. A 'KMSKS' region motif is present at residues 632–636 (KMSKS). K635 serves as a coordination point for ATP.

This sequence belongs to the class-I aminoacyl-tRNA synthetase family.

It is found in the cytoplasm. The catalysed reaction is tRNA(Leu) + L-leucine + ATP = L-leucyl-tRNA(Leu) + AMP + diphosphate. This chain is Leucine--tRNA ligase, found in Sinorhizobium fredii (strain NBRC 101917 / NGR234).